A 488-amino-acid chain; its full sequence is UDP-N-acetylmuramate--L-alanine ligase (488 aa).

Gly-127–Thr-133 contributes to the ATP binding site.

It belongs to the MurCDEF family.

It is found in the cytoplasm. It carries out the reaction UDP-N-acetyl-alpha-D-muramate + L-alanine + ATP = UDP-N-acetyl-alpha-D-muramoyl-L-alanine + ADP + phosphate + H(+). The protein operates within cell wall biogenesis; peptidoglycan biosynthesis. Functionally, cell wall formation. This chain is UDP-N-acetylmuramate--L-alanine ligase, found in Shewanella sp. (strain MR-4).